The chain runs to 244 residues: Kallikrein-6 (244 aa).

The N-terminal stretch at 1-16 (MKKLMVVLSLIAAAWA) is a signal peptide. A propeptide spans 17-21 (EEQNK) (activation peptide). In terms of domain architecture, Peptidase S1 spans 22 to 242 (LVHGGPCDKT…YTNWIQKTIQ (221 aa)). Cystine bridges form between cysteine 28/cysteine 157, cysteine 47/cysteine 63, cysteine 131/cysteine 231, cysteine 138/cysteine 203, cysteine 168/cysteine 182, and cysteine 193/cysteine 218. Active-site charge relay system residues include histidine 62 and aspartate 106. The N-linked (GlcNAc...) asparagine glycan is linked to asparagine 134. Residue serine 197 is the Charge relay system of the active site.

Inactivated by autolytic cleavage after Arg-80. In fluids, highest levels found in milk of lactating women followed by cerebrospinal fluid, nipple aspirate fluid and breast cyst fluid. Also found in serum, seminal plasma and some amniotic fluids and breast tumor cytosolic extracts. Not detected in urine. At the tissue level, highest concentrations found in glandular tissues such as salivary glands followed by lung, colon, fallopian tube, placenta, breast, pituitary and kidney. Not detected in skin, spleen, bone, thyroid, heart, ureter, liver, muscle, endometrium, testis, pancreas, seminal vesicle, ovary, adrenals and prostate. In brain, detected in gray matter neurons (at protein level). Colocalizes with pathological inclusions such as Lewy bodies and glial cytoplasmic inclusions. Overexpressed in primary breast tumors but not expressed in metastatic tumors.

The protein localises to the secreted. It localises to the nucleus. It is found in the nucleolus. The protein resides in the cytoplasm. Its subcellular location is the mitochondrion. The protein localises to the microsome. Inhibited by a range of serine protease inhibitors including soybean trypsin inhibitor, benzamidine and serpins. Activated by a range of glycosaminoglycans including chondroitin sulfate, dermatan sulfate, heparan sulfate and heparin. Functionally, serine protease which exhibits a preference for Arg over Lys in the substrate P1 position and for Ser or Pro in the P2 position. Shows activity against amyloid precursor protein, myelin basic protein, gelatin, casein and extracellular matrix proteins such as fibronectin, laminin, vitronectin and collagen. Degrades alpha-synuclein and prevents its polymerization, indicating that it may be involved in the pathogenesis of Parkinson disease and other synucleinopathies. May be involved in regulation of axon outgrowth following spinal cord injury. Tumor cells treated with a neutralizing KLK6 antibody migrate less than control cells, suggesting a role in invasion and metastasis. The polypeptide is Kallikrein-6 (KLK6) (Homo sapiens (Human)).